Reading from the N-terminus, the 116-residue chain is Large ribosomal subunit protein uL18 (116 aa).

Belongs to the universal ribosomal protein uL18 family. As to quaternary structure, part of the 50S ribosomal subunit; part of the 5S rRNA/L5/L18/L25 subcomplex. Contacts the 5S and 23S rRNAs.

This is one of the proteins that bind and probably mediate the attachment of the 5S RNA into the large ribosomal subunit, where it forms part of the central protuberance. The protein is Large ribosomal subunit protein uL18 of Shewanella woodyi (strain ATCC 51908 / MS32).